The sequence spans 134 residues: Putative nickel-responsive regulator (134 aa).

Ni(2+) contacts are provided by His-78, His-89, His-91, and Cys-97.

It belongs to the transcriptional regulatory CopG/NikR family. Ni(2+) is required as a cofactor.

Functionally, transcriptional regulator. This Chlorobaculum parvum (strain DSM 263 / NCIMB 8327) (Chlorobium vibrioforme subsp. thiosulfatophilum) protein is Putative nickel-responsive regulator.